Here is a 333-residue protein sequence, read N- to C-terminus: Leukocyte cell-derived chemotaxin 1 (333 aa).

Residues 42–62 traverse the membrane as a helical segment; it reads VGAVVLISGAVLLLFGAIGAF. Positions 104–201 constitute a BRICHOS domain; it reads GSGAEEAIEV…LCGDLPIFWL (98 aa). An intrachain disulfide couples C131 to C193. Positions 211–214 are excised as a propeptide; it reads RERR. The segment at 212–269 is disordered; sequence ERREVVRKTVPTTTKRPHSGPRGNPGPARMRNDSRPSVQEDSEPFNPDNPYHQEGESM. N-linked (GlcNAc...) asparagine glycosylation is present at N243. Intrachain disulfides connect C281/C285, C282/C322, C292/C316, and C296/C312.

It belongs to the chondromodulin-1 family. After cleavage, the post-translationally modified ChM-I is secreted as a glycoprotein.

It is found in the secreted. The protein localises to the extracellular space. The protein resides in the extracellular matrix. It localises to the endomembrane system. Its function is as follows. Bifunctional growth regulator that stimulates the growth of cultured chondrocytes in the presence of basic fibroblast growth factor (FGF) but inhibits the growth of cultured vascular endothelial cells. May contribute to the rapid growth of cartilage and vascular invasion prior to the replacement of cartilage by bone during endochondral bone development. Inhibits in vitro tube formation and mobilization of endothelial cells. Plays a role as antiangiogenic factor in cardiac valves to suppress neovascularization. This Oryctolagus cuniculus (Rabbit) protein is Leukocyte cell-derived chemotaxin 1.